We begin with the raw amino-acid sequence, 444 residues long: Argininosuccinate synthase (444 aa).

ATP-binding positions include 18–26 (AFSGGLDTS) and Ala-44. L-citrulline is bound at residue Tyr-100. Residues Gly-130 and Thr-132 each contribute to the ATP site. L-aspartate-binding residues include Thr-132, Asn-136, and Asp-137. Asn-136 contacts L-citrulline. Asp-137 is a binding site for ATP. The L-citrulline site is built by Arg-140 and Ser-193. Asp-195 is a binding site for ATP. Positions 202, 204, and 281 each coordinate L-citrulline.

The protein belongs to the argininosuccinate synthase family. Type 2 subfamily. In terms of assembly, homotetramer.

It is found in the cytoplasm. It catalyses the reaction L-citrulline + L-aspartate + ATP = 2-(N(omega)-L-arginino)succinate + AMP + diphosphate + H(+). Its pathway is amino-acid biosynthesis; L-arginine biosynthesis; L-arginine from L-ornithine and carbamoyl phosphate: step 2/3. The polypeptide is Argininosuccinate synthase (Haemophilus influenzae (strain PittEE)).